The primary structure comprises 63 residues: Conotoxin Pn-B01411 (63 aa).

Residues 1 to 22 (MRCFPVFIILLLLMASAPSFDA) form the signal peptide. A propeptide spanning residues 23 to 49 (RPKTEDDVPLSSFRDNLKRTLRTLLDP) is cleaved from the precursor. Isoleucine amide is present on isoleucine 62.

This sequence belongs to the conotoxin T superfamily. In terms of processing, contains 2 disulfide bonds that can be either 'C1-C3, C2-C4' or 'C1-C4, C2-C3', since these disulfide connectivities have been observed for conotoxins with cysteine framework V (for examples, see AC P0DQQ7 and AC P81755). Expressed by the venom duct.

The protein localises to the secreted. The polypeptide is Conotoxin Pn-B01411 (Conus pennaceus (Feathered cone)).